The following is a 225-amino-acid chain: Thymidylate kinase (225 aa).

15–22 provides a ligand contact to ATP; it reads GGEGSGKS.

This sequence belongs to the thymidylate kinase family.

The catalysed reaction is dTMP + ATP = dTDP + ADP. Functionally, phosphorylation of dTMP to form dTDP in both de novo and salvage pathways of dTTP synthesis. The protein is Thymidylate kinase of Protochlamydia amoebophila (strain UWE25).